Consider the following 202-residue polypeptide: Tetranectin (202 aa).

Positions 1–21 (MELWGPCVLLCLFSLLTQVTA) are cleaved as a signal peptide. Intrachain disulfides connect C71-C81, C98-C197, and C173-C189. One can recognise a C-type lectin domain in the interval 77–198 (VHMKCFLAFV…CRDKLPYVCQ (122 aa)).

Homotrimer.

Its subcellular location is the secreted. Functionally, tetranectin binds to plasminogen and to isolated kringle 4. May be involved in the packaging of molecules destined for exocytosis. Plays a role in retinal function. In Bos taurus (Bovine), this protein is Tetranectin (CLEC3B).